The chain runs to 1164 residues: MKKNTDSEMDQRLGYKFLVPDPKAGVFYRPLHFQYVSYSNFILHRLHEILTVKRPLLSFKNNTERIMIEISNVKVTPPDYSPIIASIKGKSYDALATFTVNIFKEVMTKEGISITKISSYEGKDSHLIKIPLLIGYGNKNPLDTAKYLVPNVIGGVFINKQSVEKVGINLVEKITTWPKFRVVKPNSFTFSFSSVSPPNVLPTRYRHYKISLDISQLEASNISSTKTFITVNIVLLSQYLSRVSLEFIRRSLSYDMPPEVVYLVNAIIDSAKRLTESITDFNIDTYINDLVEAEHIKQKSQLTINEFKYEMLHNFLPHMNYTPDQLKGFYMISLLRKFLYCIYHTSRYPDRDSMVCHRILTYGKYFETLAHDELENYIGNIRNDIMNNHKNRGTYAVNIHVLTTPGLNHAFSSLLSGKFKKSDGSYRTHPHYSWMQNISIPRSVGFYPDQVKISKMFSVRKYHPSQYLYFCSSDVPERGPQVGLVSQLSVLSSITNILTSEYLDLEKKICEYIRSYYKDDISYFETGFPITIENALVASLNPNMICDFVTDFRRRKRMGFFGNLEVGITLVRDHMNEIRINIGAGRLVRPFLVVDNGELMMDVCPELESRLDDMTFSDIQKEFPHVIEMVDIEQFTFSNVCESVQKFRMMSKDERKQYDLCDFPAEFRDGYVASSLVGINHNSGPRAILGCAQAKQAISCLSSDIRNKIDNGIHLMYPERPIVISKALETSKIAANCFGQHVTIALMSYKGINQEDGIIIKKQFIQRGGLDIVTAKKHQVEIPLENFNNKERDRSNAYSKLESNGLVRLNAFLESGDAMARNISSRTLEDDFARDNQISFDVSEKYTDMYKSRVERVQVELTDKVKVRVLTMKERRPILGDKFTTRTSQKGTVAYIADETELPYDENGITPDVIINSTSIFSRKTISMLIEVILTAAYSAKPYNNKGENRPVCFPSSNETSIDTYMQFAKQCYEHSNPKLSDEELSDKIFCEKILYDPETDKPYASKVFFGPIYYLRLRHLTQDKATVRCRGKKTKLIRQANEGRKRGGGIKFGEMERDCLIAHGAANTITEVLKDSEEDYQDVYVCENCGDIAAQIKGINTCLRCSKLNLSPLLTKIDTTHVSKVFLTQMNARGVKVKLDFERRPPSFYKPLDKVDLKPSFLA.

It belongs to the RNA polymerase beta chain family. In terms of assembly, the DNA-dependent RNA polymerase used for intermediate and late genes expression consists of eight subunits (147) kDa, (133) kDa, (35) kDa, (30) kDa, (22) kDa, (19) kDa, (18) kDa and (7) kDa totalling more than 500 kDa in mass. The same holoenzyme, with the addition of the transcription-specificity factor RAP94, is used for early gene expression.

It localises to the virion. The catalysed reaction is RNA(n) + a ribonucleoside 5'-triphosphate = RNA(n+1) + diphosphate. Part of the DNA-dependent RNA polymerase which catalyzes the transcription of viral DNA into RNA using the four ribonucleoside triphosphates as substrates. Responsible for the transcription of early, intermediate and late genes. DNA-dependent RNA polymerase associates with the early transcription factor (ETF), itself composed of D6 and A7, thereby allowing the early genes transcription. Late transcription, and probably also intermediate transcription, require newly synthesized RNA polymerase. This Bos taurus (Bovine) protein is DNA-directed RNA polymerase 132 kDa polypeptide (RPO132).